Reading from the N-terminus, the 246-residue chain is Probable transcriptional regulatory protein CLD_1467 (246 aa).

Belongs to the TACO1 family.

It is found in the cytoplasm. This chain is Probable transcriptional regulatory protein CLD_1467, found in Clostridium botulinum (strain Okra / Type B1).